The chain runs to 267 residues: MNSRVLFGSFVPVDSVLHRLDPRLKLVTCFWYVVIIFFAKGPLTYLLLVAMLGAMIGLSKVPLKMYWAGLKPLLWVIGLTIAIQVLFSSGGHVYWHWGLMAITSGGINQALVILARFILIVLASTVLTATTPPLRLADAIESLMKPLKKIKVPVNQIAMMISIALRFIPTIMDEVNTIVKAQQARGVDFTSGSVYTRVKRMVPIMVPLFVGAFRRAEDLAVAMEARGYDPDQERTRYRQLTWRRPDSIALAVVVIVSVLFFVARILL.

The next 5 helical transmembrane spans lie at 30-50, 67-87, 110-130, 152-172, and 247-267; these read FWYV…LLVA, WAGL…QVLF, ALVI…LTAT, VPVN…PTIM, and SIAL…RILL.

This sequence belongs to the energy-coupling factor EcfT family. Forms a stable energy-coupling factor (ECF) transporter complex composed of 2 membrane-embedded substrate-binding proteins (S component), 2 ATP-binding proteins (A component) and 2 transmembrane proteins (T component). May be able to interact with more than 1 S component at a time.

The protein resides in the cell membrane. Its function is as follows. Transmembrane (T) component of an energy-coupling factor (ECF) ABC-transporter complex. Unlike classic ABC transporters this ECF transporter provides the energy necessary to transport a number of different substrates. The chain is Energy-coupling factor transporter transmembrane protein EcfT from Limosilactobacillus fermentum (strain CECT 5716 / Lc40) (Lactobacillus fermentum).